Consider the following 84-residue polypeptide: Small ribosomal subunit protein bS20 (84 aa).

The protein belongs to the bacterial ribosomal protein bS20 family.

Its function is as follows. Binds directly to 16S ribosomal RNA. The polypeptide is Small ribosomal subunit protein bS20 (Phocaeicola vulgatus (strain ATCC 8482 / DSM 1447 / JCM 5826 / CCUG 4940 / NBRC 14291 / NCTC 11154) (Bacteroides vulgatus)).